The primary structure comprises 292 residues: Elongation factor Ts (292 aa).

An involved in Mg(2+) ion dislocation from EF-Tu region spans residues 79-82 (TDFV).

The protein belongs to the EF-Ts family.

It is found in the cytoplasm. Functionally, associates with the EF-Tu.GDP complex and induces the exchange of GDP to GTP. It remains bound to the aminoacyl-tRNA.EF-Tu.GTP complex up to the GTP hydrolysis stage on the ribosome. The chain is Elongation factor Ts from Staphylococcus haemolyticus (strain JCSC1435).